We begin with the raw amino-acid sequence, 662 residues long: UvrABC system protein B (662 aa).

One can recognise a Helicase ATP-binding domain in the interval 25 to 182 (KGIEKREKFQ…KKLVEIQYER (158 aa)). 38-45 (GVTGSGKT) serves as a coordination point for ATP. A Beta-hairpin motif is present at residues 91–114 (YYDYYQPEAYVAQSDTYIEKDASI). A Helicase C-terminal domain is found at 429-595 (QIDDLYTSIQ…TIIKDIREVI (167 aa)). The 36-residue stretch at 622–657 (DKLIEKYEEEMKEAAQNLQFEKAAHLRDVIYKLKKD) folds into the UVR domain.

This sequence belongs to the UvrB family. Forms a heterotetramer with UvrA during the search for lesions. Interacts with UvrC in an incision complex.

The protein localises to the cytoplasm. Functionally, the UvrABC repair system catalyzes the recognition and processing of DNA lesions. A damage recognition complex composed of 2 UvrA and 2 UvrB subunits scans DNA for abnormalities. Upon binding of the UvrA(2)B(2) complex to a putative damaged site, the DNA wraps around one UvrB monomer. DNA wrap is dependent on ATP binding by UvrB and probably causes local melting of the DNA helix, facilitating insertion of UvrB beta-hairpin between the DNA strands. Then UvrB probes one DNA strand for the presence of a lesion. If a lesion is found the UvrA subunits dissociate and the UvrB-DNA preincision complex is formed. This complex is subsequently bound by UvrC and the second UvrB is released. If no lesion is found, the DNA wraps around the other UvrB subunit that will check the other stand for damage. In Clostridium botulinum (strain Kyoto / Type A2), this protein is UvrABC system protein B.